The following is a 141-amino-acid chain: Hemoglobin subunit alpha (141 aa).

One can recognise a Globin domain in the interval 1-141 (VLSPADKTNI…VSTVLTSKYR (141 aa)). Position 3 is a phosphoserine (S3). K7 bears the N6-succinyllysine mark. T8 carries the phosphothreonine modification. K11 is modified (N6-succinyllysine). An N6-acetyllysine; alternate modification is found at K16. The residue at position 16 (K16) is an N6-succinyllysine; alternate. Y24 is modified (phosphotyrosine). The residue at position 35 (S35) is a Phosphoserine. K40 is modified (N6-succinyllysine). S49 carries the phosphoserine modification. An O2-binding site is contributed by H58. Residue H87 coordinates heme b. S102 is subject to Phosphoserine. Residue T108 is modified to Phosphothreonine. Residue S124 is modified to Phosphoserine. A phosphothreonine mark is found at T134 and T137. At S138 the chain carries Phosphoserine.

The protein belongs to the globin family. As to quaternary structure, heterotetramer of two alpha chains and two beta chains. In terms of tissue distribution, red blood cells.

In terms of biological role, involved in oxygen transport from the lung to the various peripheral tissues. Its function is as follows. Hemopressin acts as an antagonist peptide of the cannabinoid receptor CNR1. Hemopressin-binding efficiently blocks cannabinoid receptor CNR1 and subsequent signaling. The polypeptide is Hemoglobin subunit alpha (HBA) (Vulpes vulpes (Red fox)).